A 60-amino-acid polypeptide reads, in one-letter code: Mastoparan-D (60 aa).

The N-terminal stretch at 1–27 is a signal peptide; the sequence is MKNTILILFTAFIALLGFFGMSAEALA. 4 AXPX repeats span residues 27 to 30, 31 to 34, 35 to 38, and 41 to 44; these read ADPI, ADPV, AGPN, and ADPE. Positions 28 to 45 are excised as a propeptide; that stretch reads DPIADPVAGPNPEADPEA. A Leucine amide modification is found at Leu-59.

It belongs to the MCD family. Mastoparan subfamily. As to expression, expressed by the venom gland.

It is found in the secreted. It localises to the target cell membrane. In terms of biological role, antimicrobial and mast cell degranulating peptide. Has broad spectrum antibacterial activity against both Gram-positive and Gram-negative bacteria (S.aureus MIC=24-32 ug/ml, S.xylosus MIC=2 ug/ml, S.alactolyticus MIC=16 ug/ml, C.koseri MIC=4 ug/ml, E.coli MIC=8 ug/ml, K.pneumoniae MIC=32 ug/ml, P.aerugiosa MIC=128 ug/ml, S.choleraesuis MIC=16 ug/ml, S.typhimurium MIC=32 ug/ml, V.parahamelytics MIC=32 ug/ml). Affects membrane permeability of E.coli. Shows hemolytic activities on sheep, chicken and human erythrocytes. Its mast cell degranulation activity may be related to the activation of G-protein coupled receptors in mast cells as well as interaction with other proteins located in cell endosomal membranes in the mast cells. This chain is Mastoparan-D, found in Vespa ducalis (Black-tailed hornet).